Consider the following 4367-residue polypeptide: Guanylate cyclase (4367 aa).

Polar residues predominate over residues 1-10; the sequence is MKKTRTTAAE. Positions 1–70 are disordered; the sequence is MKKTRTTAAE…MSFLQGKHQQ (70 aa). The Cytoplasmic portion of the chain corresponds to 1-150; it reads MKKTRTTAAE…FKNLWEQFHR (150 aa). A compositionally biased stretch (basic and acidic residues) spans 19 to 33; it reads PHDEHRGRGREHGGA. The segment covering 54-63 has biased composition (polar residues); it reads HQATQKQMSF. A helical membrane pass occupies residues 151 to 171; it reads VINWWFLVMAIIQAIPQLHYN. Topologically, residues 172–174 are extracellular; sequence PNH. Residues 175-195 traverse the membrane as a helical segment; it reads AWSTALPFAIVLVFGMLKDAF. Over 196–373 the chain is Cytoplasmic; sequence TDLGRRERDR…GFKRPHIEKD (178 aa). The helical transmembrane segment at 374–394 threads the bilayer; that stretch reads INTYLFISFFIVFLTILISVM. At 395-452 the chain is on the extracellular side; sequence SKWSVQERDSGDTGVTDAGASSGSGSSSGETSQTYGSSVEFMLGSRDLLQNPWMSILR. A disordered region spans residues 402–426; the sequence is RDSGDTGVTDAGASSGSGSSSGETS. The segment covering 407-426 has biased composition (low complexity); that stretch reads TGVTDAGASSGSGSSSGETS. The chain crosses the membrane as a helical span at residues 453–473; sequence FLAVYAPVLPLSLPLILDVVY. Topologically, residues 474–2258 are cytoplasmic; sequence LLQSVLIEGD…VHGRLSLMRV (1785 aa). Disordered regions lie at residues 486 to 535, 550 to 699, 831 to 918, 932 to 966, 980 to 1047, 1079 to 1164, 1344 to 1593, 1607 to 1652, 1773 to 1861, and 1881 to 1946; these read IRGG…QQPL, SEKF…ISGR, ETSA…ASSL, RLEE…PQLA, VGIQ…GELS, GMSF…MPAV, PSGT…SLKS, FRRG…TGTG, GGRG…GLRS, and DKQH…PQHL. A compositionally biased stretch (polar residues) spans 523–535; sequence AHSSQNASLQQPL. Composition is skewed to basic and acidic residues over residues 605–628 and 670–679; these read ETLR…REQL and RRSDDRDRKS. The span at 850 to 863 shows a compositional bias: low complexity; it reads SAASSRSQSAPASA. Positions 880–892 are enriched in polar residues; that stretch reads QTLTNQQTGQQSP. A compositionally biased stretch (low complexity) spans 906–917; that stretch reads ASPGAADSPASS. Over residues 932 to 948 the composition is skewed to basic and acidic residues; it reads RLEETGSQKEEDSRSDR. Low complexity predominate over residues 983–996; the sequence is QSQHSSQSLLSSRQ. Over residues 1025–1047 the composition is skewed to basic and acidic residues; that stretch reads DRMYSRDYHRESRSSSPRDGELS. Polar residues-rich tracts occupy residues 1084–1094 and 1117–1130; these read SRPSSQFTFSS and RSLT…TASP. Residues 1344 to 1357 show a composition bias toward low complexity; sequence PSGTSASSGAPSGP. Gly residues-rich tracts occupy residues 1370 to 1381 and 1389 to 1400; these read QGQGHGSLGAPG and CLGGAGGSGARG. The span at 1443–1454 shows a compositional bias: pro residues; the sequence is VPSPRPLSPAGP. A compositionally biased stretch (basic and acidic residues) spans 1527 to 1542; sequence SFKEKHEEFAFSKDED. Positions 1543–1567 are enriched in acidic residues; sequence TATVDQDDTQSATDEEHDVEGEEEE. Residues 1583–1593 are compositionally biased toward low complexity; the sequence is SASASLMSLKS. Polar residues-rich tracts occupy residues 1628–1652, 1779–1791, and 1843–1852; these read GRSS…TGTG, VSLS…SSAK, and VNPSGQTYSQ. A compositionally biased stretch (basic and acidic residues) spans 1881–1922; sequence DKQHQRGHGPEGDEGSHELEGHDAHTGDSHGGHHRDQAEPRA. Residues 1933–1942 show a composition bias toward polar residues; it reads RLPQKTQNRL. The helical transmembrane segment at 2259–2279 threads the bilayer; the sequence is STVILWSFFKSLCIGLPTFLF. Residues 2280–2289 lie on the Extracellular side of the membrane; the sequence is QPQAFWSAVE. A helical membrane pass occupies residues 2290 to 2310; that stretch reads VYDPLLLMIVDFFWTTLPGII. The Cytoplasmic segment spans residues 2311–2343; the sequence is HGYSDQDLPTHLLPSVPVLYTPGRRRLYFNGFR. A helical membrane pass occupies residues 2344–2364; sequence FILWTVEGIIYSFLIFYLLQA. The Extracellular portion of the chain corresponds to 2365 to 2376; sequence TWMDGNTFHDGQ. A helical membrane pass occupies residues 2377–2397; the sequence is VLGFHSYGILLLFGSLLQSNV. Residues 2398 to 2408 lie on the Cytoplasmic side of the membrane; sequence RIILETSLWTP. Residues 2409–2429 traverse the membrane as a helical segment; the sequence is TFLFTTIVLCTIMFFPTVLLY. The Extracellular segment spans residues 2430 to 2444; that stretch reads SVTGWPRRYMELAGR. The chain crosses the membrane as a helical span at residues 2445–2465; that stretch reads VVFAWPMLYFLIPLWVSIGIL. Topologically, residues 2466-2724 are cytoplasmic; the sequence is VQLLLQVFTS…LKRLVPWYRV (259 aa). A helical membrane pass occupies residues 2725-2745; the sequence is IFMLIALYQLLSFLTEYFIDI. Topologically, residues 2746 to 2762 are extracellular; that stretch reads HWNPGETEMEPWMCVPT. Residues 2763 to 2783 traverse the membrane as a helical segment; it reads LVVEIGFAAVVVCTFYDFIFL. The Cytoplasmic portion of the chain corresponds to 2784-2785; sequence DH. The helical transmembrane segment at 2786-2806 threads the bilayer; the sequence is FSLILNSIVFLMVSSSIVFYT. Over 2807-2823 the chain is Extracellular; sequence ASHVDGTLTSVLFPVFT. The chain crosses the membrane as a helical span at residues 2824 to 2844; sequence FVILRISFLQAVVWNILFLIV. The Cytoplasmic portion of the chain corresponds to 2845 to 2858; it reads TVARFMLDKKYLPP. The chain crosses the membrane as a helical span at residues 2859 to 2879; that stretch reads LNFVHYIPLFIGIDVFVAFVG. The Extracellular segment spans residues 2880–2903; the sequence is YRLEYNQRKSFLLDYSVDASRRKQ. The chain crosses the membrane as a helical span at residues 2904-2924; the sequence is REILNTMLPSFVVDQMINSEL. Over 2925-3693 the chain is Cytoplasmic; the sequence is NEEGIPTSLK…RTHFYNNKSN (769 aa). Positions 2942 to 3150 constitute a Guanylate cyclase 1 domain; the sequence is SVIFCDVYEF…DTVNTASRMK (209 aa). Disordered regions lie at residues 3214 to 3245, 3359 to 3402, 3456 to 3475, 3485 to 3508, 3523 to 3596, and 3620 to 3653; these read DVIS…ASSG, GQTE…SRFD, SGDE…EVPL, QARE…HTPT, GCAA…ETEK, and FRRR…VDDE. The segment covering 3383–3402 has biased composition (basic and acidic residues); sequence RADRRPAGRREDSRGDSRFD. Composition is skewed to basic and acidic residues over residues 3485–3499, 3529–3541, and 3549–3569; these read QARE…KRSG, EEEK…RESE, and TESR…DARE. The segment covering 3626 to 3637 has biased composition (low complexity); the sequence is AAPSEAASPSSA. A helical membrane pass occupies residues 3694–3714; sequence INTIEQALIIFLVTFCVQTLT. Over 3715-3736 the chain is Extracellular; that stretch reads RLALPRFYVVCSHHTINLHVCT. Residues 3737–3757 traverse the membrane as a helical segment; it reads GLYWAVRATYTLAAFVLWMLF. The Cytoplasmic portion of the chain corresponds to 3758–3772; that stretch reads HYRNRKEVATCLELR. Residues 3773-3793 form a helical membrane-spanning segment; the sequence is WMVFLLNLLFISASCVFALSN. The Extracellular portion of the chain corresponds to 3794 to 3895; the sequence is SWGVCGQQQE…GSDLVTANGR (102 aa). Residues 3896-3916 form a helical membrane-spanning segment; sequence AYTYWLLSDTIELFFYIVILH. The Cytoplasmic segment spans residues 3917 to 3921; it reads HNTGL. Residues 3922-3942 traverse the membrane as a helical segment; it reads LFQNCILVDVLLMTMSLTFII. Topologically, residues 3943-3950 are extracellular; sequence TTARETAS. The helical transmembrane segment at 3951–3971 threads the bilayer; that stretch reads TVSTIATFPCYVFFNLVSAYC. Residues 3972–4367 lie on the Cytoplasmic side of the membrane; it reads KEYIDRLTFY…GSTPGSALGS (396 aa). Residues 4024–4159 enclose the Guanylate cyclase 2 domain; that stretch reads TFLFADICGF…MDVLTGNMME (136 aa). Residues Asp-4029, Ile-4030, and Asp-4073 each contribute to the Mg(2+) site. The disordered stretch occupies residues 4292–4367; that stretch reads ASHGDSGPSD…GSTPGSALGS (76 aa). Positions 4333-4344 are enriched in basic and acidic residues; it reads DGLKQLRKEIER. Residues 4356–4367 show a composition bias toward polar residues; the sequence is DIGSTPGSALGS.

This sequence in the N-terminal section; belongs to the cation transport ATPase (P-type) (TC 3.A.3) family. Type IV subfamily. The protein in the C-terminal section; belongs to the adenylyl cyclase class-4/guanylyl cyclase family. In terms of assembly, interacts with chaperone CDC50.1; the interaction regulates guanylate cyclase GC trafficking and sensing environmental changes. Interacts with UGO; the interaction regulates guanylate cyclase GC trafficking and catalytic activity. Mg(2+) serves as cofactor. The cofactor is Mn(2+).

It is found in the cell membrane. It carries out the reaction GTP = 3',5'-cyclic GMP + diphosphate. In terms of biological role, catalyzes the synthesis of the second messenger cGMP from GTP. During the tachyzoite lytic growth cycle in host cells, detects and transduces environmental changes in potassium, phosphatidic acid and pH levels. By producing cGMP in response to these environmental changes, activates PKG and thereby regulates PKG-dependent microneme secretion which is essential for tachyzoite motility, host cell attachment invasion of and egress from host cells. May play a role in the fission of connected tachyzoites at their basal pole during egress. Does not display flippase activity towards phosphatidylserine, phosphatidic acid or phosphatidylcholine. This chain is Guanylate cyclase, found in Toxoplasma gondii (strain ATCC 50853 / GT1).